Here is a 312-residue protein sequence, read N- to C-terminus: Lichenase-2 (312 aa).

Residues 1–6 (PPSVES) form the signal peptide. E99 functions as the Proton donor in the catalytic mechanism. Residue N196 is glycosylated (N-linked (GlcNAc...) asparagine). E238 (nucleophile) is an active-site residue.

It belongs to the glycosyl hydrolase 17 family.

It catalyses the reaction Hydrolysis of (1-&gt;4)-beta-D-glucosidic linkages in beta-D-glucans containing (1-&gt;3)- and (1-&gt;4)-bonds.. The protein operates within glycan metabolism; beta-D-glucan degradation. Functions in plant cell wall hydrolysis during mobilization of the endosperm in germinating grain or during the growth of vegetative tissues. This chain is Lichenase-2, found in Hordeum vulgare (Barley).